We begin with the raw amino-acid sequence, 517 residues long: 2,3-bisphosphoglycerate-independent phosphoglycerate mutase (517 aa).

Positions 12 and 62 each coordinate Mn(2+). Residue serine 62 is the Phosphoserine intermediate of the active site. Substrate contacts are provided by residues histidine 123, 153–154, arginine 185, arginine 191, 261–264, and lysine 336; these read RD and RSDR. Mn(2+) contacts are provided by aspartate 403, histidine 407, aspartate 444, histidine 445, and histidine 463.

Belongs to the BPG-independent phosphoglycerate mutase family. In terms of assembly, monomer. The cofactor is Mn(2+).

It carries out the reaction (2R)-2-phosphoglycerate = (2R)-3-phosphoglycerate. The protein operates within carbohydrate degradation; glycolysis; pyruvate from D-glyceraldehyde 3-phosphate: step 3/5. In terms of biological role, catalyzes the interconversion of 2-phosphoglycerate and 3-phosphoglycerate. In Methylobacillus flagellatus (strain ATCC 51484 / DSM 6875 / VKM B-1610 / KT), this protein is 2,3-bisphosphoglycerate-independent phosphoglycerate mutase.